Reading from the N-terminus, the 406-residue chain is Endoglucanase 1 (406 aa).

Positions 1–43 (MNSKKIGAMIAAAVLSLIVMTPAATRKIVQRQTRNSSTAVENS) are cleaved as a signal peptide. 2 stretches are compositionally biased toward polar residues: residues 30 to 41 (QRQTRNSSTAVE) and 51 to 62 (ENVPVSQTHTND). The disordered stretch occupies residues 30-62 (QRQTRNSSTAVENSAADESETENVPVSQTHTND). The active-site Proton donor is the glutamate 210. Glutamate 330 serves as the catalytic Nucleophile.

Belongs to the glycosyl hydrolase 5 (cellulase A) family.

The enzyme catalyses Endohydrolysis of (1-&gt;4)-beta-D-glucosidic linkages in cellulose, lichenin and cereal beta-D-glucans.. The polypeptide is Endoglucanase 1 (Eg I) (Ruminococcus albus).